The primary structure comprises 104 residues: Co-chaperonin GroES 2 (104 aa).

This sequence belongs to the GroES chaperonin family. As to quaternary structure, heptamer of 7 subunits arranged in a ring. Interacts with the chaperonin GroEL.

It localises to the cytoplasm. Functionally, together with the chaperonin GroEL, plays an essential role in assisting protein folding. The GroEL-GroES system forms a nano-cage that allows encapsulation of the non-native substrate proteins and provides a physical environment optimized to promote and accelerate protein folding. GroES binds to the apical surface of the GroEL ring, thereby capping the opening of the GroEL channel. The protein is Co-chaperonin GroES 2 of Bradyrhizobium diazoefficiens (strain JCM 10833 / BCRC 13528 / IAM 13628 / NBRC 14792 / USDA 110).